Here is a 400-residue protein sequence, read N- to C-terminus: Acetate kinase (400 aa).

Asparagine 10 provides a ligand contact to Mg(2+). Residue lysine 17 participates in ATP binding. Arginine 91 is a substrate binding site. Aspartate 150 (proton donor/acceptor) is an active-site residue. ATP-binding positions include 210 to 214 (HLGNG), 285 to 287 (DCR), and 333 to 337 (GIGEN). Glutamate 387 serves as a coordination point for Mg(2+).

It belongs to the acetokinase family. In terms of assembly, homodimer. Mg(2+) serves as cofactor. Mn(2+) is required as a cofactor.

The protein resides in the cytoplasm. The enzyme catalyses acetate + ATP = acetyl phosphate + ADP. Its pathway is metabolic intermediate biosynthesis; acetyl-CoA biosynthesis; acetyl-CoA from acetate: step 1/2. Catalyzes the formation of acetyl phosphate from acetate and ATP. Can also catalyze the reverse reaction. This Serratia proteamaculans (strain 568) protein is Acetate kinase.